The sequence spans 319 residues: Carboxylesterase NlhH (319 aa).

An Involved in the stabilization of the negatively charged intermediate by the formation of the oxyanion hole motif is present at residues histidine 88–glycine 90. Active-site residues include serine 162, aspartate 260, and histidine 290.

This sequence belongs to the 'GDXG' lipolytic enzyme family. In terms of assembly, monomer.

It catalyses the reaction a carboxylic ester + H2O = an alcohol + a carboxylate + H(+). In terms of biological role, hydrolyzes various short-chain esters. The protein is Carboxylesterase NlhH (nlhH) of Mycobacterium tuberculosis (strain CDC 1551 / Oshkosh).